Consider the following 858-residue polypeptide: DNA mismatch repair protein MutS (858 aa).

Position 600–607 (600–607) interacts with ATP; the sequence is GPNMSGKS.

This sequence belongs to the DNA mismatch repair MutS family.

In terms of biological role, this protein is involved in the repair of mismatches in DNA. It is possible that it carries out the mismatch recognition step. This protein has a weak ATPase activity. This is DNA mismatch repair protein MutS from Bacillus pumilus (strain SAFR-032).